The chain runs to 281 residues: MQTFSTKAQLRAALLKHHRKHDHVVLVPTMGALHAGHRALLEQARKLAGEDGVVVASIFVNPIQFNNSSDLQTYPRTPEKDLEVCEGAGVDYVFSPAPEEMYSGERSIAVEESFLSATLCGASRPGHFSGVCTVLAKLFNLVQPTDAIFGKKDYQQLAIIRRMVRDLDFPVRIHGAEIVRHGNGLAYSSRNARLTPEQKEQAVVIRQAMLQARDEFQAGADASKVKEHAAAMIEGVPGTRIDYLEIVDAETMQPVAENRKPALMAAAVYFGDVRLIDNIEL.

30–37 (MGALHAGH) serves as a coordination point for ATP. H37 functions as the Proton donor in the catalytic mechanism. Residue Q64 coordinates (R)-pantoate. Q64 is a binding site for beta-alanine. ATP is bound at residue 150 to 153 (GKKD). Q156 contributes to the (R)-pantoate binding site. Residues V179 and 187–190 (YSSR) contribute to the ATP site.

This sequence belongs to the pantothenate synthetase family. As to quaternary structure, homodimer.

The protein localises to the cytoplasm. The enzyme catalyses (R)-pantoate + beta-alanine + ATP = (R)-pantothenate + AMP + diphosphate + H(+). It participates in cofactor biosynthesis; (R)-pantothenate biosynthesis; (R)-pantothenate from (R)-pantoate and beta-alanine: step 1/1. Catalyzes the condensation of pantoate with beta-alanine in an ATP-dependent reaction via a pantoyl-adenylate intermediate. The protein is Pantothenate synthetase of Akkermansia muciniphila (strain ATCC BAA-835 / DSM 22959 / JCM 33894 / BCRC 81048 / CCUG 64013 / CIP 107961 / Muc).